The sequence spans 269 residues: Cytochrome c oxidase subunit 3 (269 aa).

The next 7 membrane-spanning stretches (helical) occupy residues 13 to 33, 46 to 66, 90 to 110, 138 to 160, 167 to 187, 207 to 227, and 245 to 265; these read PFHL…LLVL, NGHY…SFWF, GVIL…WAFF, PLLN…HSII, ALYG…FQGV, FGTG…LVAL, and AGIL…ISIY.

This sequence belongs to the cytochrome c oxidase subunit 3 family. In terms of assembly, component of the cytochrome c oxidase (complex IV, CIV), a multisubunit enzyme composed of a catalytic core of 3 subunits and several supernumerary subunits. The complex exists as a monomer or a dimer and forms supercomplexes (SCs) in the inner mitochondrial membrane with ubiquinol-cytochrome c oxidoreductase (cytochrome b-c1 complex, complex III, CIII).

It is found in the mitochondrion inner membrane. The catalysed reaction is 4 Fe(II)-[cytochrome c] + O2 + 8 H(+)(in) = 4 Fe(III)-[cytochrome c] + 2 H2O + 4 H(+)(out). Its function is as follows. Component of the cytochrome c oxidase, the last enzyme in the mitochondrial electron transport chain which drives oxidative phosphorylation. The respiratory chain contains 3 multisubunit complexes succinate dehydrogenase (complex II, CII), ubiquinol-cytochrome c oxidoreductase (cytochrome b-c1 complex, complex III, CIII) and cytochrome c oxidase (complex IV, CIV), that cooperate to transfer electrons derived from NADH and succinate to molecular oxygen, creating an electrochemical gradient over the inner membrane that drives transmembrane transport and the ATP synthase. Cytochrome c oxidase is the component of the respiratory chain that catalyzes the reduction of oxygen to water. Electrons originating from reduced cytochrome c in the intermembrane space (IMS) are transferred via the dinuclear copper A center (CU(A)) of subunit 2 and heme A of subunit 1 to the active site in subunit 1, a binuclear center (BNC) formed by heme A3 and copper B (CU(B)). The BNC reduces molecular oxygen to 2 water molecules using 4 electrons from cytochrome c in the IMS and 4 protons from the mitochondrial matrix. The protein is Cytochrome c oxidase subunit 3 (COX3) of Pyricularia grisea (Crabgrass-specific blast fungus).